The primary structure comprises 295 residues: Bifunctional protein FolD (295 aa).

NADP(+) contacts are provided by residues 166–168, Ser195, and Ile236; that span reads GRS.

Belongs to the tetrahydrofolate dehydrogenase/cyclohydrolase family. As to quaternary structure, homodimer.

It carries out the reaction (6R)-5,10-methylene-5,6,7,8-tetrahydrofolate + NADP(+) = (6R)-5,10-methenyltetrahydrofolate + NADPH. It catalyses the reaction (6R)-5,10-methenyltetrahydrofolate + H2O = (6R)-10-formyltetrahydrofolate + H(+). Its pathway is one-carbon metabolism; tetrahydrofolate interconversion. Its function is as follows. Catalyzes the oxidation of 5,10-methylenetetrahydrofolate to 5,10-methenyltetrahydrofolate and then the hydrolysis of 5,10-methenyltetrahydrofolate to 10-formyltetrahydrofolate. This chain is Bifunctional protein FolD, found in Chlorobium phaeovibrioides (strain DSM 265 / 1930) (Prosthecochloris vibrioformis (strain DSM 265)).